A 440-amino-acid polypeptide reads, in one-letter code: Streptokinase (440 aa).

A signal peptide spans 1 to 26 (MKNYLSFGMFALLFALTFGTVKPVQA). Residues 72–94 (PAQGGKTEQGLRPKSKPLATDKG) are disordered.

Its function is as follows. This protein is not a protease, but it activates plasminogen by complexing with it. As a potential virulence factor, it is thought to prevent the formation of effective fibrin barriers around the site of infection, thereby contributing to the invasiveness of the cells. This chain is Streptokinase (ska), found in Streptococcus pyogenes.